We begin with the raw amino-acid sequence, 256 residues long: Imidazole glycerol phosphate synthase subunit HisF (256 aa).

Catalysis depends on residues aspartate 12 and aspartate 131.

This sequence belongs to the HisA/HisF family. In terms of assembly, heterodimer of HisH and HisF.

It is found in the cytoplasm. The catalysed reaction is 5-[(5-phospho-1-deoxy-D-ribulos-1-ylimino)methylamino]-1-(5-phospho-beta-D-ribosyl)imidazole-4-carboxamide + L-glutamine = D-erythro-1-(imidazol-4-yl)glycerol 3-phosphate + 5-amino-1-(5-phospho-beta-D-ribosyl)imidazole-4-carboxamide + L-glutamate + H(+). The protein operates within amino-acid biosynthesis; L-histidine biosynthesis; L-histidine from 5-phospho-alpha-D-ribose 1-diphosphate: step 5/9. IGPS catalyzes the conversion of PRFAR and glutamine to IGP, AICAR and glutamate. The HisF subunit catalyzes the cyclization activity that produces IGP and AICAR from PRFAR using the ammonia provided by the HisH subunit. In Azotobacter vinelandii (strain DJ / ATCC BAA-1303), this protein is Imidazole glycerol phosphate synthase subunit HisF.